The sequence spans 426 residues: Serine--tRNA ligase (426 aa).

232-234 (TAE) lines the L-serine pocket. 263–265 (RSE) is an ATP binding site. Glu-286 lines the L-serine pocket. 350 to 353 (EISS) is an ATP binding site. Ser-385 provides a ligand contact to L-serine.

This sequence belongs to the class-II aminoacyl-tRNA synthetase family. Type-1 seryl-tRNA synthetase subfamily. As to quaternary structure, homodimer. The tRNA molecule binds across the dimer.

It is found in the cytoplasm. The catalysed reaction is tRNA(Ser) + L-serine + ATP = L-seryl-tRNA(Ser) + AMP + diphosphate + H(+). The enzyme catalyses tRNA(Sec) + L-serine + ATP = L-seryl-tRNA(Sec) + AMP + diphosphate + H(+). It participates in aminoacyl-tRNA biosynthesis; selenocysteinyl-tRNA(Sec) biosynthesis; L-seryl-tRNA(Sec) from L-serine and tRNA(Sec): step 1/1. In terms of biological role, catalyzes the attachment of serine to tRNA(Ser). Is also able to aminoacylate tRNA(Sec) with serine, to form the misacylated tRNA L-seryl-tRNA(Sec), which will be further converted into selenocysteinyl-tRNA(Sec). The chain is Serine--tRNA ligase from Pediococcus pentosaceus (strain ATCC 25745 / CCUG 21536 / LMG 10740 / 183-1w).